The following is a 331-amino-acid chain: 5-dehydro-2-deoxygluconokinase (331 aa).

It belongs to the carbohydrate kinase PfkB family.

It carries out the reaction 5-dehydro-2-deoxy-D-gluconate + ATP = 6-phospho-5-dehydro-2-deoxy-D-gluconate + ADP + H(+). It participates in polyol metabolism; myo-inositol degradation into acetyl-CoA; acetyl-CoA from myo-inositol: step 5/7. Catalyzes the phosphorylation of 5-dehydro-2-deoxy-D-gluconate (2-deoxy-5-keto-D-gluconate or DKG) to 6-phospho-5-dehydro-2-deoxy-D-gluconate (DKGP). This Halalkalibacterium halodurans (strain ATCC BAA-125 / DSM 18197 / FERM 7344 / JCM 9153 / C-125) (Bacillus halodurans) protein is 5-dehydro-2-deoxygluconokinase.